A 365-amino-acid chain; its full sequence is Short-chain dehydrogenase iccH (365 aa).

Residues leucine 16, arginine 52, and aspartate 70 each coordinate NADP(+). A glycan (N-linked (GlcNAc...) asparagine) is linked at asparagine 90. Asparagine 102, tyrosine 221, lysine 225, and serine 260 together coordinate NADP(+). Catalysis depends on tyrosine 221, which acts as the Proton donor. Residue lysine 225 is the Lowers pKa of active site Tyr of the active site. The helical transmembrane segment at 267–287 threads the bilayer; the sequence is IWVMFLLMKFVLPLLAPLAVW. N-linked (GlcNAc...) asparagine glycosylation is found at asparagine 291 and asparagine 324.

The protein belongs to the short-chain dehydrogenases/reductases (SDR) family.

It is found in the membrane. Its pathway is mycotoxin biosynthesis. Functionally, NADH-dependent flavin oxidoreductase; part of the gene cluster that mediates the biosynthesis of ilicicolin H, a 4-hydroxy-2-pyridonealkaloid that has potent and broad antifungal activities by inhibiting the mitochondrial respiration chain. IccA to iccE are sufficient for ilicicolin H biosynthesis and the roles of the remaining enzymes, iccF, iccG and iccH within the pathway have still to be determined. The biosynthesis of ilicicolin H starts with formation of the tetramic acid by the hybrid PKS-NRPS synthetase iccA with the partnering trans-enoyl reductase iccB since iccA lacks a designated enoylreductase (ER) domain. The cytochrome P450 monooxygenase iccC then catalyzes the ring expansion of the tetramate to the acyclic 2-pyridone. The pericyclase iccD further converts the acyclic 2-pyridone into 8-epi-ilicicolin H. Finally, the epimerase iccE converts 8-epi-ilicicolin H into ilicicolin H via epimerizationd. This Talaromyces variabilis (Penicillium variabile) protein is Short-chain dehydrogenase iccH.